A 247-amino-acid polypeptide reads, in one-letter code: ATP synthase subunit a (247 aa).

The next 6 membrane-spanning stretches (helical) occupy residues 23-43 (ISFT…TLFL), 90-110 (LFMF…VIGF), 116-136 (VIVT…IGFA), 145-165 (MFFP…IELI), 194-214 (GFVV…FAFL), and 215-235 (SAIT…FTIL).

Belongs to the ATPase A chain family. As to quaternary structure, F-type ATPases have 2 components, CF(1) - the catalytic core - and CF(0) - the membrane proton channel. CF(1) has five subunits: alpha(3), beta(3), gamma(1), delta(1), epsilon(1). CF(0) has three main subunits: a(1), b(2) and c(9-12). The alpha and beta chains form an alternating ring which encloses part of the gamma chain. CF(1) is attached to CF(0) by a central stalk formed by the gamma and epsilon chains, while a peripheral stalk is formed by the delta and b chains.

It is found in the cell inner membrane. Key component of the proton channel; it plays a direct role in the translocation of protons across the membrane. The chain is ATP synthase subunit a from Paramagnetospirillum magneticum (strain ATCC 700264 / AMB-1) (Magnetospirillum magneticum).